We begin with the raw amino-acid sequence, 202 residues long: Holliday junction branch migration complex subunit RuvA (202 aa).

The domain I stretch occupies residues 1-65; the sequence is MIAYVEGRLA…EDALELYGFA (65 aa). The interval 66–144 is domain II; that stretch reads TWDERQTFIV…VEDLPAAAPL (79 aa). Positions 145–155 are flexible linker; it reads VTGGAPGGVFR. Residues 155–202 are domain III; the sequence is RDALAGLANLGYGEEEASHVLKEVLHGEPDLDVGGALRAALRALARGR.

Belongs to the RuvA family. In terms of assembly, homotetramer. Forms an RuvA(8)-RuvB(12)-Holliday junction (HJ) complex. HJ DNA is sandwiched between 2 RuvA tetramers; dsDNA enters through RuvA and exits via RuvB. An RuvB hexamer assembles on each DNA strand where it exits the tetramer. Each RuvB hexamer is contacted by two RuvA subunits (via domain III) on 2 adjacent RuvB subunits; this complex drives branch migration. In the full resolvosome a probable DNA-RuvA(4)-RuvB(12)-RuvC(2) complex forms which resolves the HJ.

Its subcellular location is the cytoplasm. Its function is as follows. The RuvA-RuvB-RuvC complex processes Holliday junction (HJ) DNA during genetic recombination and DNA repair, while the RuvA-RuvB complex plays an important role in the rescue of blocked DNA replication forks via replication fork reversal (RFR). RuvA specifically binds to HJ cruciform DNA, conferring on it an open structure. The RuvB hexamer acts as an ATP-dependent pump, pulling dsDNA into and through the RuvAB complex. HJ branch migration allows RuvC to scan DNA until it finds its consensus sequence, where it cleaves and resolves the cruciform DNA. The chain is Holliday junction branch migration complex subunit RuvA from Nitratidesulfovibrio vulgaris (strain DP4) (Desulfovibrio vulgaris).